We begin with the raw amino-acid sequence, 341 residues long: Ferrochelatase (341 aa).

His-196 and Glu-277 together coordinate Fe cation.

This sequence belongs to the ferrochelatase family.

Its subcellular location is the cytoplasm. It catalyses the reaction heme b + 2 H(+) = protoporphyrin IX + Fe(2+). It participates in porphyrin-containing compound metabolism; protoheme biosynthesis; protoheme from protoporphyrin-IX: step 1/1. Functionally, catalyzes the ferrous insertion into protoporphyrin IX. This is Ferrochelatase from Synechococcus sp. (strain JA-3-3Ab) (Cyanobacteria bacterium Yellowstone A-Prime).